The chain runs to 346 residues: D-alanine--D-alanine ligase (346 aa).

Positions 134–340 (KFLAESLGVK…IDYTYIHSIQ (207 aa)) constitute an ATP-grasp domain. Position 161–212 (161–212 (EYPVIIKPVRLGSSIGVSIVKSEAELDYALDVAFEFDNDVIVEPFIDGVKEF)) interacts with ATP. Positions 284, 296, and 298 each coordinate Mg(2+).

The protein belongs to the D-alanine--D-alanine ligase family. The cofactor is Mg(2+). Requires Mn(2+) as cofactor.

The protein localises to the cytoplasm. The enzyme catalyses 2 D-alanine + ATP = D-alanyl-D-alanine + ADP + phosphate + H(+). The protein operates within cell wall biogenesis; peptidoglycan biosynthesis. Cell wall formation. In Sulfurovum sp. (strain NBC37-1), this protein is D-alanine--D-alanine ligase.